Reading from the N-terminus, the 857-residue chain is Inactive rhomboid protein 1 (857 aa).

The Cytoplasmic segment spans residues 1–413 (MAELRRDSTS…HRPFFTYWIT (413 aa)). Residues 283–307 (FESPSDSTMKDVDSKQLDESELTGS) are disordered. Positions 290 to 300 (TMKDVDSKQLD) are enriched in basic and acidic residues. The helical transmembrane segment at 414-434 (FVHILITILAVCIYGIAPVGF) threads the bilayer. Topologically, residues 435-661 (SQHETVDSVL…PDQFYRLWLS (227 aa)) are lumenal. Residue Asn-585 is glycosylated (N-linked (GlcNAc...) asparagine). Residues 662–682 (LFLHAGILHCLVSVCFQMTIL) form a helical membrane-spanning segment. The Cytoplasmic segment spans residues 683-693 (RDLEKLAGWLR). The chain crosses the membrane as a helical span at residues 694–714 (ISIIYILSGITGNLASAIFLP). Residues 715 to 716 (YR) are Lumenal-facing. A helical transmembrane segment spans residues 717 to 737 (AEVGPAGSQFGILACLFVELI). Residues 738-748 (QSWQILAQPWR) are Cytoplasmic-facing. Residues 749–769 (AFTKLLCVVLFLFAFGLLPWI) traverse the membrane as a helical segment. Over 770–774 (DNFAH) the chain is Lumenal. The chain crosses the membrane as a helical span at residues 775–795 (ISGFISGFFLSFAFLPYISFG). At 796–805 (RLDMYRKRCQ) the chain is on the cytoplasmic side. The helical transmembrane segment at 806–826 (IIIFLVVFLGLFAGLVVLFYV) threads the bilayer. Over 827–857 (HPIKCEWCELLTCIPFTDKFCEKYDLNAHLH) the chain is Lumenal.

This sequence belongs to the peptidase S54 family.

It localises to the endoplasmic reticulum membrane. The protein resides in the golgi apparatus membrane. Functionally, regulates ADAM17 protease, a sheddase of the epidermal growth factor (EGF) receptor ligands and TNF, thereby plays a role in sleep, cell survival, proliferation, migration and inflammation. Does not exhibit any protease activity on its own. The protein is Inactive rhomboid protein 1 (rhbdf1) of Danio rerio (Zebrafish).